Consider the following 116-residue polypeptide: Putative iron-sulfur cluster insertion protein ErpA (116 aa).

Residues cysteine 44, cysteine 108, and cysteine 110 each contribute to the iron-sulfur cluster site.

The protein belongs to the HesB/IscA family. In terms of assembly, homodimer. It depends on iron-sulfur cluster as a cofactor.

Required for insertion of 4Fe-4S clusters. The chain is Putative iron-sulfur cluster insertion protein ErpA from Azoarcus sp. (strain BH72).